A 209-amino-acid polypeptide reads, in one-letter code: Uracil phosphoribosyltransferase (209 aa).

5-phospho-alpha-D-ribose 1-diphosphate is bound by residues R79, R104, and 131 to 139 (DPMLATGGS). Residues I194 and 199-201 (GDA) each bind uracil. D200 contributes to the 5-phospho-alpha-D-ribose 1-diphosphate binding site.

Belongs to the UPRTase family. Mg(2+) serves as cofactor.

The catalysed reaction is UMP + diphosphate = 5-phospho-alpha-D-ribose 1-diphosphate + uracil. Its pathway is pyrimidine metabolism; UMP biosynthesis via salvage pathway; UMP from uracil: step 1/1. Allosterically activated by GTP. In terms of biological role, catalyzes the conversion of uracil and 5-phospho-alpha-D-ribose 1-diphosphate (PRPP) to UMP and diphosphate. The sequence is that of Uracil phosphoribosyltransferase from Streptococcus sanguinis (strain SK36).